We begin with the raw amino-acid sequence, 170 residues long: Peptide deformylase (170 aa).

Fe cation is bound by residues C94 and H136. E137 is a catalytic residue. H140 provides a ligand contact to Fe cation.

It belongs to the polypeptide deformylase family. Fe(2+) serves as cofactor.

The enzyme catalyses N-terminal N-formyl-L-methionyl-[peptide] + H2O = N-terminal L-methionyl-[peptide] + formate. Functionally, removes the formyl group from the N-terminal Met of newly synthesized proteins. Requires at least a dipeptide for an efficient rate of reaction. N-terminal L-methionine is a prerequisite for activity but the enzyme has broad specificity at other positions. In Wolinella succinogenes (strain ATCC 29543 / DSM 1740 / CCUG 13145 / JCM 31913 / LMG 7466 / NCTC 11488 / FDC 602W) (Vibrio succinogenes), this protein is Peptide deformylase.